A 231-amino-acid polypeptide reads, in one-letter code: Ureidoacrylate amidohydrolase RutB (231 aa).

Asp25 serves as the catalytic Proton acceptor. Lys134 is an active-site residue. Residue Cys167 is the Nucleophile of the active site.

This sequence belongs to the isochorismatase family. RutB subfamily.

It catalyses the reaction (Z)-3-ureidoacrylate + H2O + H(+) = (Z)-3-aminoacrylate + NH4(+) + CO2. The enzyme catalyses (Z)-3-ureidoacrylate + H2O = (Z)-3-aminoacrylate + carbamate + H(+). It carries out the reaction (Z)-2-methylureidoacrylate + H2O + H(+) = (Z)-2-methylaminoacrylate + NH4(+) + CO2. Its function is as follows. Hydrolyzes ureidoacrylate to form aminoacrylate and carbamate. The carbamate hydrolyzes spontaneously, thereby releasing one of the nitrogen atoms of the pyrimidine ring as ammonia and one of its carbon atoms as CO2. The protein is Ureidoacrylate amidohydrolase RutB of Escherichia coli O139:H28 (strain E24377A / ETEC).